Consider the following 121-residue polypeptide: SPbeta prophage-derived uncharacterized protein YorW (121 aa).

This Bacillus subtilis (strain 168) protein is SPbeta prophage-derived uncharacterized protein YorW (yorW).